The chain runs to 52 residues: UPF0391 membrane protein ACIAD3602 (52 aa).

The next 2 helical transmembrane spans lie at 6-26 and 30-50; these read IIFA…VAGL and FAVI…ISRG.

The protein belongs to the UPF0391 family.

Its subcellular location is the cell membrane. The polypeptide is UPF0391 membrane protein ACIAD3602 (Acinetobacter baylyi (strain ATCC 33305 / BD413 / ADP1)).